The chain runs to 74 residues: Consomatin Gh1 (74 aa).

Positions 1–22 (MQTACWVMVMMMVWITAPLSEG) are cleaved as a signal peptide. Positions 23 to 57 (GKLNDVIRGLVPDDVTPQLILRSLFFHRPSDSVVR) are excised as a propeptide. An intrachain disulfide couples Cys-65 to Cys-70. Trp-67 is modified (D-tryptophan). 4-hydroxyproline is present on residues Pro-71, Pro-72, and Pro-74.

This sequence belongs to the conotoxin C superfamily. Consomatin family. Expressed by the venom duct.

Its subcellular location is the secreted. Its function is as follows. Moderately activates human somatostatin receptors (SSTR) with a preferential activation of SSTR1 and SSTR4. In vivo, does not cause behavioral changes in mice within a few minutes of intracranial injection, but causes a progressive loss of movement thereafter. Four to five hours after injection, mice recover, even with the highest dose tested. Shows antinociception and antihyperalgesia activities in two mouse models of acute pain, most probably by acting outside the central nervous system. The sequence is that of Consomatin Gh1 from Conus grahami (Cone snail).